The sequence spans 322 residues: Phosphatidylserine decarboxylase proenzyme (322 aa).

Catalysis depends on charge relay system; for autoendoproteolytic cleavage activity residues Asp-90, His-147, and Ser-254. Ser-254 (schiff-base intermediate with substrate; via pyruvic acid; for decarboxylase activity) is an active-site residue. At Ser-254 the chain carries Pyruvic acid (Ser); by autocatalysis. Residues 294–322 (EVEPAPLPADEIKAEHDASPLVDNKKDDT) are disordered. The segment covering 303–322 (DEIKAEHDASPLVDNKKDDT) has biased composition (basic and acidic residues).

This sequence belongs to the phosphatidylserine decarboxylase family. PSD-B subfamily. Prokaryotic type I sub-subfamily. Heterodimer of a large membrane-associated beta subunit and a small pyruvoyl-containing alpha subunit. Pyruvate serves as cofactor. Post-translationally, is synthesized initially as an inactive proenzyme. Formation of the active enzyme involves a self-maturation process in which the active site pyruvoyl group is generated from an internal serine residue via an autocatalytic post-translational modification. Two non-identical subunits are generated from the proenzyme in this reaction, and the pyruvate is formed at the N-terminus of the alpha chain, which is derived from the carboxyl end of the proenzyme. The autoendoproteolytic cleavage occurs by a canonical serine protease mechanism, in which the side chain hydroxyl group of the serine supplies its oxygen atom to form the C-terminus of the beta chain, while the remainder of the serine residue undergoes an oxidative deamination to produce ammonia and the pyruvoyl prosthetic group on the alpha chain. During this reaction, the Ser that is part of the protease active site of the proenzyme becomes the pyruvoyl prosthetic group, which constitutes an essential element of the active site of the mature decarboxylase.

It localises to the cell membrane. The enzyme catalyses a 1,2-diacyl-sn-glycero-3-phospho-L-serine + H(+) = a 1,2-diacyl-sn-glycero-3-phosphoethanolamine + CO2. It participates in phospholipid metabolism; phosphatidylethanolamine biosynthesis; phosphatidylethanolamine from CDP-diacylglycerol: step 2/2. Catalyzes the formation of phosphatidylethanolamine (PtdEtn) from phosphatidylserine (PtdSer). The chain is Phosphatidylserine decarboxylase proenzyme from Salmonella paratyphi C (strain RKS4594).